We begin with the raw amino-acid sequence, 330 residues long: MSVEADGRKLLRVEVKNSQTPIENKPHWIKTRATMGPEYRDMRRRMIDGDLHTVCQEAGCPNIFECWEDREATFLIGGDHCTRRCDFCQIESAKPEGYDKDEPRRVAESVKQMGLRYATVTSVCRDDLEDEGAWLCAETIRQIHQVTPGVGVEMLAQDFSGKQDLLDIVFEARPEVFGHNLETVPRIFKRIRPGFRYDRSLAVLDSAHEAGLITKSNLILGMGETREEISQAMRALHDANTDLLTITQYLRPNSYLHPIDRWVTPQEFDELAEEAREIGFVGVMSGPLVRSSYRAGRLYRQAMEARGERPVMIVTGYRDGAKPAPFAAKE.

7 residues coordinate [4Fe-4S] cluster: Cys55, Cys60, Cys66, Cys81, Cys85, Cys88, and Ser292. One can recognise a Radical SAM core domain in the interval Trp67–Val281.

It belongs to the radical SAM superfamily. Lipoyl synthase family. Requires [4Fe-4S] cluster as cofactor.

Its subcellular location is the cytoplasm. It catalyses the reaction [[Fe-S] cluster scaffold protein carrying a second [4Fe-4S](2+) cluster] + N(6)-octanoyl-L-lysyl-[protein] + 2 oxidized [2Fe-2S]-[ferredoxin] + 2 S-adenosyl-L-methionine + 4 H(+) = [[Fe-S] cluster scaffold protein] + N(6)-[(R)-dihydrolipoyl]-L-lysyl-[protein] + 4 Fe(3+) + 2 hydrogen sulfide + 2 5'-deoxyadenosine + 2 L-methionine + 2 reduced [2Fe-2S]-[ferredoxin]. It functions in the pathway protein modification; protein lipoylation via endogenous pathway; protein N(6)-(lipoyl)lysine from octanoyl-[acyl-carrier-protein]: step 2/2. Functionally, catalyzes the radical-mediated insertion of two sulfur atoms into the C-6 and C-8 positions of the octanoyl moiety bound to the lipoyl domains of lipoate-dependent enzymes, thereby converting the octanoylated domains into lipoylated derivatives. The polypeptide is Lipoyl synthase (Cutibacterium acnes (strain DSM 16379 / KPA171202) (Propionibacterium acnes)).